Reading from the N-terminus, the 189-residue chain is Small ribosomal subunit protein uS5 (189 aa).

In terms of domain architecture, S5 DRBM spans 22-85 (FVDKLVAINR…EAAKRELIFV (64 aa)).

Belongs to the universal ribosomal protein uS5 family. As to quaternary structure, part of the 30S ribosomal subunit. Contacts proteins S4 and S8.

Its function is as follows. With S4 and S12 plays an important role in translational accuracy. Functionally, located at the back of the 30S subunit body where it stabilizes the conformation of the head with respect to the body. This chain is Small ribosomal subunit protein uS5, found in Rhizobium etli (strain CIAT 652).